A 158-amino-acid chain; its full sequence is Ribonuclease H (158 aa).

In terms of domain architecture, RNase H type-1 spans 3 to 144; that stretch reads ELKLIHIFTD…CDQLARAAAE (142 aa). Residues D12, E50, D72, and D136 each contribute to the Mg(2+) site.

The protein belongs to the RNase H family. In terms of assembly, monomer. Mg(2+) is required as a cofactor.

Its subcellular location is the cytoplasm. It catalyses the reaction Endonucleolytic cleavage to 5'-phosphomonoester.. Endonuclease that specifically degrades the RNA of RNA-DNA hybrids. The sequence is that of Ribonuclease H from Shewanella sp. (strain MR-7).